We begin with the raw amino-acid sequence, 89 residues long: Small ribosomal subunit protein uS15 (89 aa).

This sequence belongs to the universal ribosomal protein uS15 family. Part of the 30S ribosomal subunit. Forms a bridge to the 50S subunit in the 70S ribosome, contacting the 23S rRNA.

In terms of biological role, one of the primary rRNA binding proteins, it binds directly to 16S rRNA where it helps nucleate assembly of the platform of the 30S subunit by binding and bridging several RNA helices of the 16S rRNA. Forms an intersubunit bridge (bridge B4) with the 23S rRNA of the 50S subunit in the ribosome. The sequence is that of Small ribosomal subunit protein uS15 from Magnetococcus marinus (strain ATCC BAA-1437 / JCM 17883 / MC-1).